Reading from the N-terminus, the 176-residue chain is ATP-dependent protease subunit HslV (176 aa).

T4 is an active-site residue. Na(+)-binding residues include A159, C162, and T165.

This sequence belongs to the peptidase T1B family. HslV subfamily. In terms of assembly, a double ring-shaped homohexamer of HslV is capped on each side by a ring-shaped HslU homohexamer. The assembly of the HslU/HslV complex is dependent on binding of ATP.

Its subcellular location is the cytoplasm. The catalysed reaction is ATP-dependent cleavage of peptide bonds with broad specificity.. Its activity is regulated as follows. Allosterically activated by HslU binding. Protease subunit of a proteasome-like degradation complex believed to be a general protein degrading machinery. This Wolbachia sp. subsp. Brugia malayi (strain TRS) protein is ATP-dependent protease subunit HslV.